The chain runs to 932 residues: ER degradation-enhancing alpha-mannosidase-like protein 3 (932 aa).

The signal sequence occupies residues 1-41 (MSEAGGRGCGSPVPQRARWRLVAATAAFCLVSATSVWTAGA). Asn118 is a glycosylation site (N-linked (GlcNAc...) asparagine). The active-site Proton donor is Glu146. N-linked (GlcNAc...) asparagine glycosylation is present at Asn195. Asp293 is a catalytic residue. The active-site Proton donor is the Glu387. Glu405 is an active-site residue. Residue Thr491 participates in Ca(2+) binding. N-linked (GlcNAc...) asparagine glycans are attached at residues Asn504 and Asn511. One can recognise a PA domain in the interval 674–779 (LSKHKETRGF…KEGSIILDAI (106 aa)). A compositionally biased stretch (basic and acidic residues) spans 790-799 (SDKAKDRDPE). The disordered stretch occupies residues 790-908 (SDKAKDRDPE…PNVSWGKKVQ (119 aa)). N-linked (GlcNAc...) asparagine glycosylation is found at Asn810 and Asn814. Residues 812–825 (SQNQSGEQISSSSQ) show a composition bias toward low complexity. Over residues 856 to 890 (ASISPSEQTSNPTENHETTNLNGECTDLDNQLQEQ) the composition is skewed to polar residues. An N-linked (GlcNAc...) asparagine glycan is attached at Asn900. A Prevents secretion from ER motif is present at residues 929–932 (KDEL).

It belongs to the glycosyl hydrolase 47 family. The cofactor is Ca(2+).

The protein localises to the endoplasmic reticulum lumen. It carries out the reaction N(4)-(alpha-D-Man-(1-&gt;2)-alpha-D-Man-(1-&gt;2)-alpha-D-Man-(1-&gt;3)-[alpha-D-Man-(1-&gt;2)-alpha-D-Man-(1-&gt;3)-[alpha-D-Man-(1-&gt;2)-alpha-D-Man-(1-&gt;6)]-alpha-D-Man-(1-&gt;6)]-beta-D-Man-(1-&gt;4)-beta-D-GlcNAc-(1-&gt;4)-beta-D-GlcNAc)-L-asparaginyl-[protein] (N-glucan mannose isomer 9A1,2,3B1,2,3) + 4 H2O = N(4)-(alpha-D-Man-(1-&gt;3)-[alpha-D-Man-(1-&gt;3)-[alpha-D-Man-(1-&gt;6)]-alpha-D-Man-(1-&gt;6)]-beta-D-Man-(1-&gt;4)-beta-D-GlcNAc-(1-&gt;4)-beta-D-GlcNAc)-L-asparaginyl-[protein] (N-glucan mannose isomer 5A1,2) + 4 beta-D-mannose. The enzyme catalyses N(4)-(alpha-D-Man-(1-&gt;2)-alpha-D-Man-(1-&gt;2)-alpha-D-Man-(1-&gt;3)-[alpha-D-Man-(1-&gt;3)-[alpha-D-Man-(1-&gt;2)-alpha-D-Man-(1-&gt;6)]-alpha-D-Man-(1-&gt;6)]-beta-D-Man-(1-&gt;4)-beta-D-GlcNAc-(1-&gt;4)-beta-D-GlcNAc)-L-asparaginyl-[protein] (N-glucan mannose isomer 8A1,2,3B1,3) + 3 H2O = N(4)-(alpha-D-Man-(1-&gt;3)-[alpha-D-Man-(1-&gt;3)-[alpha-D-Man-(1-&gt;6)]-alpha-D-Man-(1-&gt;6)]-beta-D-Man-(1-&gt;4)-beta-D-GlcNAc-(1-&gt;4)-beta-D-GlcNAc)-L-asparaginyl-[protein] (N-glucan mannose isomer 5A1,2) + 3 beta-D-mannose. Its pathway is protein modification; protein glycosylation. Its function is as follows. Involved in endoplasmic reticulum-associated degradation (ERAD). Accelerates the glycoprotein ERAD by proteasomes, by catalyzing mannose trimming from Man8GlcNAc2 to Man7GlcNAc2 in the N-glycans. May also participate in mannose trimming from all glycoproteins and not just misfolded ones targeted to ERAD. May have alpha 1,2-mannosidase activity. The sequence is that of ER degradation-enhancing alpha-mannosidase-like protein 3 (EDEM3) from Homo sapiens (Human).